The chain runs to 332 residues: Phosphate acyltransferase (332 aa).

It belongs to the PlsX family. As to quaternary structure, homodimer. Probably interacts with PlsY.

The protein resides in the cytoplasm. The catalysed reaction is a fatty acyl-[ACP] + phosphate = an acyl phosphate + holo-[ACP]. Its pathway is lipid metabolism; phospholipid metabolism. Catalyzes the reversible formation of acyl-phosphate (acyl-PO(4)) from acyl-[acyl-carrier-protein] (acyl-ACP). This enzyme utilizes acyl-ACP as fatty acyl donor, but not acyl-CoA. This Fusobacterium nucleatum subsp. nucleatum (strain ATCC 25586 / DSM 15643 / BCRC 10681 / CIP 101130 / JCM 8532 / KCTC 2640 / LMG 13131 / VPI 4355) protein is Phosphate acyltransferase.